The sequence spans 433 residues: 26S proteasome regulatory subunit 7 (433 aa).

The tract at residues 1–23 (MPDYLGADQRKTKEEEKEDKPIR) is disordered. Over residues 8–23 (DQRKTKEEEKEDKPIR) the composition is skewed to basic and acidic residues. 216 to 223 (GPPGTGKT) provides a ligand contact to ATP.

It belongs to the AAA ATPase family. Post-translationally, phosphorylated. Dephosphorylated by ublcp1 which impairs psmc2 ATPase activity and disrupts 26S proteasome assembly.

The protein resides in the cytoplasm. It is found in the nucleus. In terms of biological role, the 26S proteasome is involved in the ATP-dependent degradation of ubiquitinated proteins. The regulatory (or ATPase) complex confers ATP dependency and substrate specificity to the 26S complex. The chain is 26S proteasome regulatory subunit 7 (psmc2) from Xenopus laevis (African clawed frog).